Consider the following 147-residue polypeptide: Hemoglobin subunit epsilon (147 aa).

In terms of domain architecture, Globin spans 3–147 (HFTAEEKVAI…VAIALGHKYH (145 aa)). Residues S14 and S51 each carry the phosphoserine modification. The heme b site is built by H64 and H93.

Belongs to the globin family. In terms of assembly, heterotetramer of two alpha chains and two epsilon chains in early embryonic hemoglobin Gower-2; two zeta chains and two epsilon chains in early embryonic hemoglobin Gower-1. Red blood cells.

Functionally, the epsilon chain is a beta-type chain of early mammalian embryonic hemoglobin. The polypeptide is Hemoglobin subunit epsilon (HBE1) (Cebus kaapori (Ka'apor capuchin)).